We begin with the raw amino-acid sequence, 374 residues long: N5-carboxyaminoimidazole ribonucleotide synthase (374 aa).

ATP-binding positions include Arg-108, Lys-148, 153 to 159 (GYDGKGQ), 183 to 186 (EKYL), Glu-191, His-214, and 266 to 267 (NE). The 185-residue stretch at 112-296 (KETLKSAGTK…QFDTHILAVT (185 aa)) folds into the ATP-grasp domain.

This sequence belongs to the PurK/PurT family. In terms of assembly, homodimer.

The catalysed reaction is 5-amino-1-(5-phospho-beta-D-ribosyl)imidazole + hydrogencarbonate + ATP = 5-carboxyamino-1-(5-phospho-D-ribosyl)imidazole + ADP + phosphate + 2 H(+). Its pathway is purine metabolism; IMP biosynthesis via de novo pathway; 5-amino-1-(5-phospho-D-ribosyl)imidazole-4-carboxylate from 5-amino-1-(5-phospho-D-ribosyl)imidazole (N5-CAIR route): step 1/2. In terms of biological role, catalyzes the ATP-dependent conversion of 5-aminoimidazole ribonucleotide (AIR) and HCO(3)(-) to N5-carboxyaminoimidazole ribonucleotide (N5-CAIR). The chain is N5-carboxyaminoimidazole ribonucleotide synthase from Staphylococcus aureus (strain MSSA476).